The primary structure comprises 1103 residues: Centrosomal protein of 126 kDa (1103 aa).

Residues 1–12 are compositionally biased toward low complexity; sequence MLAGRPGAQSAG. Positions 1-36 are disordered; that stretch reads MLAGRPGAQSAGAGVGAGPPDAPGARDGGGRPRPGA. 2 coiled-coil regions span residues 43-116 and 182-222; these read HLEK…FQRA and QKHL…KLLE. Disordered stretches follow at residues 380-409 and 723-812; these read NTAE…ESPT and ESKA…PGQS. A compositionally biased stretch (basic and acidic residues) spans 723–735; it reads ESKAPVHASDSKT. Basic residues predominate over residues 736-748; it reads QKTKPQRGVKFTR. 2 stretches are compositionally biased toward polar residues: residues 763–784 and 798–812; these read RKPT…QTQG and NIKS…PGQS.

As to quaternary structure, interacts with DCTN1.

It localises to the midbody. Its subcellular location is the cytoplasm. The protein resides in the cytoskeleton. It is found in the microtubule organizing center. The protein localises to the centrosome. It localises to the cilium basal body. In terms of biological role, participate in cytokinesis. Necessary for microtubules and mitotic spindle organization. Involved in primary cilium formation. The protein is Centrosomal protein of 126 kDa of Mus musculus (Mouse).